We begin with the raw amino-acid sequence, 229 residues long: MELLLLSNSTLPGKAWLEHALPLIAEQLQGRRSAVFIPFAGVTQTWDDYTEKTAAVLAPLGVSVTGIHSVVDPVAAIENAEIVIVGGGNTFQLLKQCRERGLLAPITDVVKRGALYIGWSAGANLACPTIRTTNDMPIVDPQGFDALNLFPLQINPHFTNALPEGHKGETREQRIRELLVVAPELTIIGLPEGNWITVSKGHATLGGPNTTYVFKAGEEAVPLEAGHRF.

Residues serine 120, aspartate 135, and histidine 157 each act as charge relay system in the active site.

This sequence belongs to the peptidase S51 family.

It localises to the cytoplasm. It catalyses the reaction Dipeptidase E catalyzes the hydrolysis of dipeptides Asp-|-Xaa. It does not act on peptides with N-terminal Glu, Asn or Gln, nor does it cleave isoaspartyl peptides.. Functionally, hydrolyzes dipeptides containing N-terminal aspartate residues. May play a role in allowing the cell to use peptide aspartate to spare carbon otherwise required for the synthesis of the aspartate family of amino acids. In Shigella flexneri serotype 5b (strain 8401), this protein is Peptidase E.